The sequence spans 410 residues: Lipid droplet-regulating VLDL assembly factor AUP1 (410 aa).

Met-1 carries the post-translational modification N-acetylmethionine. The Cytoplasmic segment spans residues 1 to 20 (MEPPPAPGPERLFDSHRLPS). Residues 21-41 (DGFLLLALLLYAPVGLCLLVL) lie within the membrane without spanning it. Over 42–410 (RLFLGLHVFL…FRERQAQEAE (369 aa)) the chain is Cytoplasmic. Residues 259–293 (LTPADKAEHMKRQRHPRLRPQSVQSSFPSPPSPSS) are disordered. A Phosphoserine modification is found at Ser-292. Residues 296-338 (QLTILAQRVKEVLPHVPLNVIQRDLARTGCVDLTITNLLEGAV) enclose the CUE domain. Positions 348–367 (GSQSLPTASAPKFPSSGLVT) are disordered. The residue at position 363 (Ser-363) is a Phosphoserine. Thr-367 is modified (phosphothreonine).

Belongs to the AUP1 family. In terms of assembly, identified in a complex that contains SEL1L, OS9, FAF2/UBXD8, UBE2J1/UBC6E and AUP1. Interacts with the cytoplasmic tail of ITGA2B, ITGA1, ITGA2, ITGA5, ITGAV and ITGAM. Interacts (via C-terminus) with UBE2G2; the interaction recruits UBE2G2 to lipid droplets. Interacts with ubiquitin ligases AMFR/gp78 and RNF139/TRC8; this promotes interaction of UBE2G2 with AMFR and RNF139. Interacts with apolipoprotein APOB. Monoubiquitinated and diubiquitinated.

The protein localises to the endoplasmic reticulum membrane. It localises to the lipid droplet. In terms of biological role, plays a role in the translocation of terminally misfolded proteins from the endoplasmic reticulum lumen to the cytoplasm and their degradation by the proteasome. Plays a role in lipid droplet formation. Induces lipid droplet clustering. Recruits ubiquitin-conjugating enzyme UBE2G2 to lipid droplets which facilitates its interaction with ubiquitin ligases AMFR/gp78 and RNF139/TRC8, leading to sterol-induced ubiquitination of HMGCR and its subsequent proteasomal degradation. Also required for the degradation of INSIG1, SREBF1 and SREBF2. Plays a role in regulating assembly and secretion of very low density lipoprotein particles and stability of apolipoprotein APOB. This is Lipid droplet-regulating VLDL assembly factor AUP1 from Rattus norvegicus (Rat).